The primary structure comprises 264 residues: Aminoglycoside 3'-phosphotransferase (264 aa).

Residue Asp190 is the Proton acceptor of the active site.

Belongs to the aminoglycoside phosphotransferase family.

It carries out the reaction kanamycin A + ATP = kanamycin 3'-phosphate + ADP + H(+). Its function is as follows. Resistance to kanamycin and structurally-related aminoglycosides, including amikacin. The protein is Aminoglycoside 3'-phosphotransferase (aphA) of Enterococcus faecalis (Streptococcus faecalis).